Consider the following 176-residue polypeptide: Small ribosomal subunit protein uS5 (176 aa).

Positions Leu-11–Val-74 constitute an S5 DRBM domain.

This sequence belongs to the universal ribosomal protein uS5 family. In terms of assembly, part of the 30S ribosomal subunit. Contacts proteins S4 and S8.

In terms of biological role, with S4 and S12 plays an important role in translational accuracy. Located at the back of the 30S subunit body where it stabilizes the conformation of the head with respect to the body. The sequence is that of Small ribosomal subunit protein uS5 from Rickettsia rickettsii (strain Iowa).